The primary structure comprises 926 residues: Rap guanine nucleotide exchange factor 3 (926 aa).

Serine 79 bears the Phosphoserine mark. Residues 110–186 enclose the DEP domain; the sequence is ATYPTLIRDR…RDAQFYRFPG (77 aa). The interaction with PDE3B stretch occupies residues 218–242; sequence TVALRKSPGQRTDEELDLIFEELVH. 3',5'-cyclic AMP-binding positions include 311–314 and 321–322; these read GQLA and RA. Positions 369–388 are disordered; it reads TSQGAGPSRPPTPGRNRYTV. Positions 384–521 constitute an N-terminal Ras-GEF domain; sequence NRYTVMSGTP…EQYPERRRHH (138 aa). Residues 398–422 form an interaction with PDE3B region; the sequence is ELLLEAMRPDSSAHDPTETFLSDFL. Serine 531 and serine 867 each carry phosphoserine. The Ras-GEF domain maps to 665–892; it reads SAKDLAGQLT…SRISTCSEQS (228 aa).

As to quaternary structure, interacts with PDE3B and PIK3R6; form a signaling complex that regulates phosphatidylinositol 3-kinase gamma in angiogenesis. As to expression, expressed at low levels in adult brain. Strongly expressed in parts of the neonatal brain, including the septum and the thalamus.

The protein resides in the cytoplasm. It is found in the membrane. Its function is as follows. Guanine nucleotide exchange factor (GEF) for RAP1A and RAP2A small GTPases that is activated by binding cAMP. Through simultaneous binding of PDE3B to RAPGEF3 and PIK3R6 is assembled in a signaling complex in which it activates the PI3K gamma complex and which is involved in angiogenesis. Plays a role in the modulation of the cAMP-induced dynamic control of endothelial barrier function through a pathway that is independent on Rho-mediated signaling. Required for the actin rearrangement at cell-cell junctions, such as stress fibers and junctional actin. The polypeptide is Rap guanine nucleotide exchange factor 3 (Rapgef3) (Rattus norvegicus (Rat)).